Reading from the N-terminus, the 126-residue chain is Large-conductance mechanosensitive channel (126 aa).

2 consecutive transmembrane segments (helical) span residues 8–28 (FAMR…AAFT) and 70–90 (IQQI…VKVI).

The protein belongs to the MscL family. Homopentamer.

The protein resides in the cell membrane. In terms of biological role, channel that opens in response to stretch forces in the membrane lipid bilayer. May participate in the regulation of osmotic pressure changes within the cell. This Exiguobacterium sp. (strain ATCC BAA-1283 / AT1b) protein is Large-conductance mechanosensitive channel.